Reading from the N-terminus, the 434-residue chain is UPF0597 protein CLK_1462 (434 aa).

The protein belongs to the UPF0597 family.

The chain is UPF0597 protein CLK_1462 from Clostridium botulinum (strain Loch Maree / Type A3).